A 133-amino-acid polypeptide reads, in one-letter code: CDGSH iron-sulfur domain-containing protein 2 homolog (133 aa).

The Lumenal segment spans residues 1 to 35 (MEPISHLVKSSLPNYLSSLPVPDSIGGWFKLSFKD). The helical transmembrane segment at 36-58 (WLALIPPTVVVAGIGYTAYLAYC) threads the bilayer. Residues 59-133 (PAARASCSAK…DNVGPIVIKK (75 aa)) lie on the Cytoplasmic side of the membrane. [2Fe-2S] cluster contacts are provided by Cys100, Cys102, Cys111, and His115.

Belongs to the CISD protein family. CISD2 subfamily. The cofactor is [2Fe-2S] cluster.

The protein resides in the endoplasmic reticulum membrane. The sequence is that of CDGSH iron-sulfur domain-containing protein 2 homolog from Drosophila sechellia (Fruit fly).